The sequence spans 68 residues: Protein P33 (68 aa).

Residues 34 to 63 (IVNLQGRIAELEARETEMLARVDTLIARLA) adopt a coiled-coil conformation.

Functionally, assembly protein. This chain is Protein P33 (XXXIII), found in Acinetobacter calcoaceticus (Arthrobacter siderocapsulatus).